A 156-amino-acid polypeptide reads, in one-letter code: 6,7-dimethyl-8-ribityllumazine synthase (156 aa).

Residues F22, 57 to 59, and 81 to 83 each bind 5-amino-6-(D-ribitylamino)uracil; these read AYE and SVI. 86-87 serves as a coordination point for (2S)-2-hydroxy-3-oxobutyl phosphate; it reads GT. H89 (proton donor) is an active-site residue. Position 114 (F114) interacts with 5-amino-6-(D-ribitylamino)uracil. R128 is a binding site for (2S)-2-hydroxy-3-oxobutyl phosphate.

This sequence belongs to the DMRL synthase family. Forms an icosahedral capsid composed of 60 subunits, arranged as a dodecamer of pentamers.

It catalyses the reaction (2S)-2-hydroxy-3-oxobutyl phosphate + 5-amino-6-(D-ribitylamino)uracil = 6,7-dimethyl-8-(1-D-ribityl)lumazine + phosphate + 2 H2O + H(+). It functions in the pathway cofactor biosynthesis; riboflavin biosynthesis; riboflavin from 2-hydroxy-3-oxobutyl phosphate and 5-amino-6-(D-ribitylamino)uracil: step 1/2. Catalyzes the formation of 6,7-dimethyl-8-ribityllumazine by condensation of 5-amino-6-(D-ribitylamino)uracil with 3,4-dihydroxy-2-butanone 4-phosphate. This is the penultimate step in the biosynthesis of riboflavin. This is 6,7-dimethyl-8-ribityllumazine synthase from Photobacterium profundum (strain SS9).